The following is a 256-amino-acid chain: MDALQALVLGALQGITEWLPVSSEGQTMLAMISWLGMRPTDALSCSIFLHTGTMLAVLVRFRSRLLGMLNTESKLMRTVIVATLFTGITGVPLYMLFRDRFTGGEQATLLIGSLLIATGLMLRLRSSSTKDMEEISTKDMVLLGLAQGFSILPGVSRSGTTLTVLLMRGVKQDDALMVSFIISVPAVLGAIALDCLAGSPLSIRSLPGAVMLASSFITGYATMDVLMRFSRNVSFSWFCITMGMITLALTALPEVQ.

The next 7 helical transmembrane spans lie at 39 to 59 (PTDA…AVLV), 77 to 97 (RTVI…YMLF), 101 to 121 (FTGG…TGLM), 135 to 155 (ISTK…LPGV), 176 to 196 (LMVS…LDCL), 206 to 226 (LPGA…MDVL), and 233 to 253 (VSFS…TALP).

The protein belongs to the UppP family.

Its subcellular location is the cell membrane. The enzyme catalyses di-trans,octa-cis-undecaprenyl diphosphate + H2O = di-trans,octa-cis-undecaprenyl phosphate + phosphate + H(+). In terms of biological role, catalyzes the dephosphorylation of undecaprenyl diphosphate (UPP). The polypeptide is Undecaprenyl-diphosphatase (Methanothrix thermoacetophila (strain DSM 6194 / JCM 14653 / NBRC 101360 / PT) (Methanosaeta thermophila)).